Consider the following 273-residue polypeptide: Spore development regulator vosA (273 aa).

Low complexity predominate over residues 66-75 (STTQELQSTQ). The interval 66–86 (STTQELQSTQPIAVRQQPRAA) is disordered. Residues 70–253 (ELQSTQPIAV…KEQGCIISIK (184 aa)) enclose the Velvet domain. A Nuclear localization signal motif is present at residues 211-218 (FPTLTEIK). Basic and acidic residues predominate over residues 254 to 267 (KGNERARPRGADGR). Residues 254–273 (KGNERARPRGADGRSDDEDD) are disordered.

It belongs to the velvet family. VosA subfamily. Forms a heterodimeric complex with velB; the formation of the velB-vosA complex is light-dependent.

It is found in the nucleus. Functionally, component of the velB-vosA heterodimeric complex that plays a dual role in activating genes associated with spore maturation and repressing certain development-associated genes. The complex binds DNA through the DNA-binding domain of vosA that recognizes an 11-nucleotide consensus sequence 5'-CTGGCCGCGGC-3' consisting of two motifs in the promoters of key developmental regulatory genes. Positively regulates the expression of wetA and represses abaA and brlA. Acts as a crucial regulator of both conidiation capacity and conidial quality. Responsible for the synthesis and accumulation of intracellular trehalose. The sequence is that of Spore development regulator vosA from Beauveria bassiana (strain ARSEF 2860) (White muscardine disease fungus).